Here is a 491-residue protein sequence, read N- to C-terminus: Ketol-acid reductoisomerase (NADP(+)) (491 aa).

The region spanning 15–208 (AQLGKCRFMG…GGHRAGVLES (194 aa)) is the KARI N-terminal Rossmann domain. Residues 45–48 (CGAQ), Arg-68, Arg-76, Ser-78, and 108–110 (DKQ) contribute to the NADP(+) site. His-132 is a catalytic residue. Residue Gly-158 coordinates NADP(+). KARI C-terminal knotted domains lie at 209 to 344 (SFVA…TAPQ) and 345 to 484 (YEGK…MTDM). Positions 217, 221, 389, and 393 each coordinate Mg(2+). Residue Ser-414 coordinates substrate.

It belongs to the ketol-acid reductoisomerase family. Mg(2+) is required as a cofactor.

It carries out the reaction (2R)-2,3-dihydroxy-3-methylbutanoate + NADP(+) = (2S)-2-acetolactate + NADPH + H(+). The enzyme catalyses (2R,3R)-2,3-dihydroxy-3-methylpentanoate + NADP(+) = (S)-2-ethyl-2-hydroxy-3-oxobutanoate + NADPH + H(+). Its pathway is amino-acid biosynthesis; L-isoleucine biosynthesis; L-isoleucine from 2-oxobutanoate: step 2/4. The protein operates within amino-acid biosynthesis; L-valine biosynthesis; L-valine from pyruvate: step 2/4. In terms of biological role, involved in the biosynthesis of branched-chain amino acids (BCAA). Catalyzes an alkyl-migration followed by a ketol-acid reduction of (S)-2-acetolactate (S2AL) to yield (R)-2,3-dihydroxy-isovalerate. In the isomerase reaction, S2AL is rearranged via a Mg-dependent methyl migration to produce 3-hydroxy-3-methyl-2-ketobutyrate (HMKB). In the reductase reaction, this 2-ketoacid undergoes a metal-dependent reduction by NADPH to yield (R)-2,3-dihydroxy-isovalerate. This Salmonella arizonae (strain ATCC BAA-731 / CDC346-86 / RSK2980) protein is Ketol-acid reductoisomerase (NADP(+)).